A 412-amino-acid chain; its full sequence is 3,4-dihydroxybenzoate--[aryl-carrier protein] ligase (412 aa).

Belongs to the ATP-dependent AMP-binding enzyme family.

It carries out the reaction holo-[aryl-carrier protein] + 3,4-dihydroxybenzoate + ATP = 3,4-dihydroxybenzoyl-[aryl-carrier protein] + AMP + diphosphate. It catalyses the reaction 3,4-dihydroxybenzoate + ATP + H(+) = 3,4-dihydroxybenzoyl-5'-AMP + diphosphate. The catalysed reaction is 3,4-dihydroxybenzoyl-5'-AMP + holo-[aryl-carrier protein] = 3,4-dihydroxybenzoyl-[aryl-carrier protein] + AMP + H(+). It participates in siderophore biosynthesis; petrobactin biosynthesis. With respect to regulation, ATP-pyrophosphate exchange is inhibited in vitro by nonhydrolyzable acylsulfamate analogs that mimic the AsbC-bound intermediate 3,4-dihydroxybenzoyl-AMP. Involved in the biosynthesis of petrobactin, a catecholate siderophore that functions in both iron acquisition and virulence. Catalyzes the adenylation of 3,4-dihydroxybenzoate (3,4-DHBA) to the corresponding AMP ester, followed by the transfer of the activated unit to the phosphopantetheine thiol of the aryl-carrier protein AsbD. The chain is 3,4-dihydroxybenzoate--[aryl-carrier protein] ligase from Bacillus anthracis.